The following is a 564-amino-acid chain: Oxalyl-CoA decarboxylase (564 aa).

2 residues coordinate substrate: isoleucine 32 and tyrosine 118. ADP contacts are provided by arginine 158 and lysine 220. Position 261 to 265 (261 to 265 (AAARS)) interacts with substrate. ADP-binding residues include arginine 280, aspartate 302, and isoleucine 322. Asparagine 355 provides a ligand contact to substrate. Thiamine diphosphate is bound by residues tyrosine 372 and 396 to 398 (ANT). A substrate-binding site is contributed by 403–404 (RN). 421–423 (GVM) serves as a coordination point for thiamine diphosphate. Mg(2+) is bound at residue aspartate 447. Residue 448–449 (SA) participates in thiamine diphosphate binding. The Mg(2+) site is built by asparagine 474 and glycine 476. Tyrosine 478 provides a ligand contact to thiamine diphosphate. 550-552 (SGH) provides a ligand contact to substrate.

The protein belongs to the TPP enzyme family. As to quaternary structure, homotetramer; dimer of dimers. Mg(2+) serves as cofactor. It depends on thiamine diphosphate as a cofactor.

It carries out the reaction oxalyl-CoA + H(+) = formyl-CoA + CO2. Its pathway is metabolic intermediate degradation; oxalate degradation; CO(2) and formate from oxalate: step 2/2. In terms of biological role, involved in the catabolism of oxalate and in the adapatation to low pH via the induction of the oxalate-dependent acid tolerance response (ATR). Catalyzes the decarboxylation of oxalyl-CoA to yield carbon dioxide and formyl-CoA. This chain is Oxalyl-CoA decarboxylase (oxc), found in Escherichia coli O157:H7.